A 428-amino-acid polypeptide reads, in one-letter code: UPF0761 membrane protein Ppha_1623 (428 aa).

6 consecutive transmembrane segments (helical) span residues 52–72, 108–128, 148–168, 189–209, 216–233, and 252–272; these read LLSIVPILAVILSILNVFVVF, SVPILGGVFLFIIALFLISTV, FTLYWTVLTLGPVLIGSSLAA, LLSFFPFINSVAAFFLLYMLV, FVHAFSGALLAALLFELS, and GALSVIPMLFFWVYLGWIVVL.

It belongs to the UPF0761 family.

It is found in the cell inner membrane. This is UPF0761 membrane protein Ppha_1623 from Pelodictyon phaeoclathratiforme (strain DSM 5477 / BU-1).